We begin with the raw amino-acid sequence, 532 residues long: MAQAPVSPVVLVILDGWGYRQSTEANAIALAKTPVMDCLWTSYPRTLIHTSGKDVGLPNGQMGNSEVGHLNLGAGRIVPQELVRISDAVEDKSLLRNPALVNICQEVRDRQSKLHLIGLCSDGGVHSHLDHLIGLLELAKEQHLDQVCIHVITDGRDTNTNEGINAVAKLESSIKEIGVGRIVTVSGRYYAMDRDRRWDRIQKAYDVYTQDRPGDGRSATEVIKDFYKNSITDEFIEPTRIAPGAIKSGDGVIFFNFRPDRARQLCYALTMPNFDGFERELIQPLSFVTFTQYDPKLPVKVAFEPQNLNNILGEVVAREGLKQFRTAETEKYPHVTYFFNGGLENPFEGEDRELIQSPMVATYDQAPAMSAETVTDTACNAIEKGIYSLVVINYANPDMVGHTGNLEAAIQAIETVDNCLGRLLTSISKMGGTVLITADHGNAELMVDENGNPWTAHSTNPVPLIIVEGEGRKIPGHGGAVDLADNGRLADIAPTILEILQLPKPEEMTGRSLIEPIHLEIKQNRTPVRISR.

Mn(2+) is bound by residues Asp-15 and Ser-65. The active-site Phosphoserine intermediate is Ser-65. Substrate-binding positions include His-126, Arg-156–Asp-157, Arg-188, Arg-194, Arg-258–Arg-261, and Lys-331. Positions 398, 402, 439, 440, and 457 each coordinate Mn(2+).

This sequence belongs to the BPG-independent phosphoglycerate mutase family. Monomer. Mn(2+) is required as a cofactor.

The catalysed reaction is (2R)-2-phosphoglycerate = (2R)-3-phosphoglycerate. The protein operates within carbohydrate degradation; glycolysis; pyruvate from D-glyceraldehyde 3-phosphate: step 3/5. Catalyzes the interconversion of 2-phosphoglycerate and 3-phosphoglycerate. In Rippkaea orientalis (strain PCC 8801 / RF-1) (Cyanothece sp. (strain PCC 8801)), this protein is 2,3-bisphosphoglycerate-independent phosphoglycerate mutase.